A 263-amino-acid chain; its full sequence is (E)-2-((N-methylformamido)methylene)succinate hydrolase (263 aa).

Ser-96 serves as the catalytic Nucleophile. Active-site residues include Asn-120 and His-241.

The protein belongs to the AB hydrolase superfamily. Monomer.

The enzyme catalyses (E)-2-((N-methylformamido) methylene)succinate + 2 H2O + H(+) = succinate semialdehyde + methylamine + formate + CO2. Its function is as follows. Involved in the degradation of the pyridine ring of trigonelline (TG; N-methylnicotinate) into succinate and methylamine as carbon and nitrogen sources, respectively. Catalyzes the hydrolysis of (E)-2-((N-methylformamido)methylene)succinate (MFMS) into formic acid, succinate semialdehyde (SSA), methylamine and carbon dioxide. The protein is (E)-2-((N-methylformamido)methylene)succinate hydrolase of Acinetobacter baylyi (strain ATCC 33305 / BD413 / ADP1).